We begin with the raw amino-acid sequence, 79 residues long: Acyl carrier protein (79 aa).

The Carrier domain maps to 2-77 (SDVAERVKKI…DAIDFIKANA (76 aa)). An O-(pantetheine 4'-phosphoryl)serine modification is found at Ser37.

The protein belongs to the acyl carrier protein (ACP) family. In terms of processing, 4'-phosphopantetheine is transferred from CoA to a specific serine of apo-ACP by AcpS. This modification is essential for activity because fatty acids are bound in thioester linkage to the sulfhydryl of the prosthetic group.

It localises to the cytoplasm. The protein operates within lipid metabolism; fatty acid biosynthesis. Its function is as follows. Carrier of the growing fatty acid chain in fatty acid biosynthesis. The sequence is that of Acyl carrier protein from Azospirillum brasilense.